Reading from the N-terminus, the 202-residue chain is Arenicin-1 (202 aa).

Residues 1-25 form the signal peptide; it reads MTSTQSVAVCATLILAIFCVNDIHC. A propeptide spanning residues 26–181 is cleaved from the precursor; sequence DPIAEARAAA…SGDNNEPEKR (156 aa). Residues 73–168 enclose the BRICHOS domain; it reads GDGVEGSVMV…ACQGKSVYWL (96 aa). 2 disulfides stabilise this stretch: C100/C160 and C184/C201.

Its function is as follows. Has antimicrobial activity against the Gram-negative bacteria E.coli and P.mirabilis, the Gram-positive bacterium L.monocytogenes and the yeast C.albicans. The polypeptide is Arenicin-1 (Arenicola marina (Lugworm)).